We begin with the raw amino-acid sequence, 88 residues long: uncharacterized protein (88 aa).

This is an uncharacterized protein from Bacillus subtilis (strain 168).